The sequence spans 436 residues: F-box/LRR-repeat protein 20 (436 aa).

Residues 22–68 (AVINKKLPKELLLRIFSFLDVVTLCRCAQVSRAWNVLALDGSNWQRI) enclose the F-box domain. LRR repeat units lie at residues 74-100 (QRDIEGRVVENISKRCGGFLRKLSLRG), 101-126 (CLGVGDNALRTFAQNCRNIEVLSLNG), 127-152 (CTKTTDATCTSLSKFCSKLRHLDLAS), 153-178 (CTSITNMSLKALSEGCPLLEQLNISW), 179-204 (CDQVTKDGIQALVRGCGGLKALFLKG), 205-230 (CTQLEDEALKYIGAHCPELVTLNLQT), 231-256 (CLQITDEGLITICRGCHKLQSLCASG), 257-282 (CSNITDAILNALGQNCPRLRILEVAR), 283-308 (CSQLTDVGFTTLARNCHELEKMDLEE), 309-334 (CVQITDSTLIQLSIHCPRLQVLSLSH), 335-363 (CELITDDGIRHLGNGACAHDQLEVIELDN), 364-388 (CPLITDASLEHLKSCHSLERIELYD), and 389-414 (CQQITRAGIKRLRTHLPNIKVHAYFA). Threonine 417 carries the post-translational modification Phosphothreonine. At serine 421 the chain carries Phosphoserine.

As to quaternary structure, interacts with SKP1 and CUL1. As to expression, highly expressed in brain.

The protein resides in the cytoplasm. Its function is as follows. Substrate-recognition component of the SCF (SKP1-CUL1-F-box protein)-type E3 ubiquitin ligase complex. Isoform 3 regulates neural transmission by binding and ubiquitinating RIMS1, a modulator of presynaptic plasticity. The protein is F-box/LRR-repeat protein 20 (Fbxl20) of Mus musculus (Mouse).